Reading from the N-terminus, the 272-residue chain is Ribosomal RNA small subunit methyltransferase A (272 aa).

Residues N18, L20, G45, E66, D91, and N113 each contribute to the S-adenosyl-L-methionine site.

The protein belongs to the class I-like SAM-binding methyltransferase superfamily. rRNA adenine N(6)-methyltransferase family. RsmA subfamily.

The protein localises to the cytoplasm. The enzyme catalyses adenosine(1518)/adenosine(1519) in 16S rRNA + 4 S-adenosyl-L-methionine = N(6)-dimethyladenosine(1518)/N(6)-dimethyladenosine(1519) in 16S rRNA + 4 S-adenosyl-L-homocysteine + 4 H(+). Its function is as follows. Specifically dimethylates two adjacent adenosines (A1518 and A1519) in the loop of a conserved hairpin near the 3'-end of 16S rRNA in the 30S particle. May play a critical role in biogenesis of 30S subunits. The sequence is that of Ribosomal RNA small subunit methyltransferase A from Yersinia pseudotuberculosis serotype O:1b (strain IP 31758).